The following is a 268-amino-acid chain: Tryptophan synthase alpha chain (268 aa).

Catalysis depends on proton acceptor residues glutamate 49 and aspartate 60.

This sequence belongs to the TrpA family. As to quaternary structure, tetramer of two alpha and two beta chains.

The catalysed reaction is (1S,2R)-1-C-(indol-3-yl)glycerol 3-phosphate + L-serine = D-glyceraldehyde 3-phosphate + L-tryptophan + H2O. Its pathway is amino-acid biosynthesis; L-tryptophan biosynthesis; L-tryptophan from chorismate: step 5/5. In terms of biological role, the alpha subunit is responsible for the aldol cleavage of indoleglycerol phosphate to indole and glyceraldehyde 3-phosphate. In Xanthomonas oryzae pv. oryzae (strain PXO99A), this protein is Tryptophan synthase alpha chain.